The primary structure comprises 356 residues: 3'-5' exonuclease (356 aa).

The interval 1–120 (MDKYLIKMPT…TPSPEKEKPE (120 aa)) is disordered. Basic and acidic residues-rich tracts occupy residues 29–56 (TIDK…ENTP) and 71–85 (KNQD…IKNE). Over residues 99-113 (LTRSTRSMAEEGTPS) the composition is skewed to low complexity. Phosphoserine is present on residues Ser-105 and Ser-113. Positions 155 to 316 (TTLDVVPMAF…GQVIYRDLEQ (162 aa)) constitute a 3'-5' exonuclease domain. 3 residues coordinate Mg(2+): Asp-165, Glu-167, and Asp-303.

The protein belongs to the WRNexo family.

The protein resides in the nucleus. In terms of biological role, has exonuclease activity on both single-stranded and duplex templates bearing overhangs, but not blunt ended duplex DNA, and cleaves in a 3'-5' direction. Essential for the formation of DNA replication focal centers. Has an important role in maintaining genome stability. The sequence is that of 3'-5' exonuclease from Drosophila willistoni (Fruit fly).